A 470-amino-acid polypeptide reads, in one-letter code: Neuraminidase (470 aa).

Topologically, residues 1–14 are intravirion; the sequence is MNPNQKIITIGSIS. Residues 11–32 form an involved in apical transport and lipid raft association region; the sequence is GSISLGLVVFNVLLHVVSIIVT. The chain crosses the membrane as a helical span at residues 15–35; it reads LGLVVFNVLLHVVSIIVTVLV. The hypervariable stalk region stretch occupies residues 32–86; it reads TVLVLGRGGKNRICNETVVREYNETVRIEKVTQWHNTNVIEYVPYWNEGTYMNNT. The Virion surface portion of the chain corresponds to 36–470; the sequence is LGRGGKNRIC…AILPFDIDKM (435 aa). 3 N-linked (GlcNAc...) asparagine; by host glycosylation sites follow: asparagine 46, asparagine 54, and asparagine 84. Residues 89–470 are head of neuraminidase; sequence ICDVKGFAPF…AILPFDIDKM (382 aa). 8 disulfide bridges follow: cysteine 90–cysteine 417, cysteine 122–cysteine 127, cysteine 182–cysteine 229, cysteine 231–cysteine 236, cysteine 277–cysteine 290, cysteine 279–cysteine 288, cysteine 316–cysteine 335, and cysteine 421–cysteine 446. Arginine 116 contributes to the substrate binding site. Residue asparagine 144 is glycosylated (N-linked (GlcNAc...) asparagine; by host). The active-site Proton donor/acceptor is the aspartate 149. Arginine 150 lines the substrate pocket. 275–276 contributes to the substrate binding site; it reads EE. Position 291 (arginine 291) interacts with substrate. Aspartate 292 lines the Ca(2+) pocket. Asparagine 293 carries N-linked (GlcNAc...) asparagine; by host glycosylation. Ca(2+) contacts are provided by glycine 296 and aspartate 322. Residue arginine 368 coordinates substrate. An N-linked (GlcNAc...) asparagine; by host glycan is attached at asparagine 398. Tyrosine 402 (nucleophile) is an active-site residue.

This sequence belongs to the glycosyl hydrolase 34 family. As to quaternary structure, homotetramer. It depends on Ca(2+) as a cofactor. Post-translationally, N-glycosylated.

It is found in the virion membrane. The protein localises to the host apical cell membrane. The enzyme catalyses Hydrolysis of alpha-(2-&gt;3)-, alpha-(2-&gt;6)-, alpha-(2-&gt;8)- glycosidic linkages of terminal sialic acid residues in oligosaccharides, glycoproteins, glycolipids, colominic acid and synthetic substrates.. Its activity is regulated as follows. Inhibited by the neuraminidase inhibitors zanamivir (Relenza) and oseltamivir (Tamiflu). These drugs interfere with the release of progeny virus from infected cells and are effective against all influenza strains. Resistance to neuraminidase inhibitors is quite rare. In terms of biological role, catalyzes the removal of terminal sialic acid residues from viral and cellular glycoconjugates. Cleaves off the terminal sialic acids on the glycosylated HA during virus budding to facilitate virus release. Additionally helps virus spread through the circulation by further removing sialic acids from the cell surface. These cleavages prevent self-aggregation and ensure the efficient spread of the progeny virus from cell to cell. Otherwise, infection would be limited to one round of replication. Described as a receptor-destroying enzyme because it cleaves a terminal sialic acid from the cellular receptors. May facilitate viral invasion of the upper airways by cleaving the sialic acid moieties on the mucin of the airway epithelial cells. Likely to plays a role in the budding process through its association with lipid rafts during intracellular transport. May additionally display a raft-association independent effect on budding. Plays a role in the determination of host range restriction on replication and virulence. Sialidase activity in late endosome/lysosome traffic seems to enhance virus replication. The polypeptide is Neuraminidase (Influenza A virus (strain A/Equine/Jillin/1/1989 H3N8)).